We begin with the raw amino-acid sequence, 156 residues long: Arginine repressor (156 aa).

Belongs to the ArgR family.

It localises to the cytoplasm. It functions in the pathway amino-acid biosynthesis; L-arginine biosynthesis [regulation]. In terms of biological role, regulates arginine biosynthesis genes. The protein is Arginine repressor of Vibrio atlanticus (strain LGP32) (Vibrio splendidus (strain Mel32)).